A 110-amino-acid chain; its full sequence is Class I hydrophobin Po.HYD (110 aa).

Residues methionine 1–threonine 27 form the signal peptide. 4 cysteine pairs are disulfide-bonded: cysteine 35/cysteine 91, cysteine 42/cysteine 85, cysteine 43/cysteine 75, and cysteine 92/cysteine 105.

It belongs to the fungal hydrophobin family. Self-assembles to form functional amyloid fibrils called rodlets. Self-assembly into fibrillar rodlets occurs spontaneously at hydrophobic:hydrophilic interfaces and the rodlets further associate laterally to form amphipathic monolayers.

The protein resides in the secreted. It localises to the cell wall. Functionally, aerial growth, conidiation, and dispersal of filamentous fungi in the environment rely upon a capability of their secreting small amphipathic proteins called hydrophobins (HPBs) with low sequence identity. Class I can self-assemble into an outermost layer of rodlet bundles on aerial cell surfaces, conferring cellular hydrophobicity that supports fungal growth, development and dispersal; whereas Class II form highly ordered films at water-air interfaces through intermolecular interactions but contribute nothing to the rodlet structure. This Pleurotus ostreatus (Oyster mushroom) protein is Class I hydrophobin Po.HYD.